Consider the following 192-residue polypeptide: Fe/S biogenesis protein NfuA (192 aa).

The [4Fe-4S] cluster site is built by Cys-149 and Cys-152.

This sequence belongs to the NfuA family. As to quaternary structure, homodimer. [4Fe-4S] cluster is required as a cofactor.

Involved in iron-sulfur cluster biogenesis. Binds a 4Fe-4S cluster, can transfer this cluster to apoproteins, and thereby intervenes in the maturation of Fe/S proteins. Could also act as a scaffold/chaperone for damaged Fe/S proteins. The protein is Fe/S biogenesis protein NfuA of Shewanella baltica (strain OS223).